The primary structure comprises 355 residues: Probable dual-specificity RNA methyltransferase RlmN (355 aa).

Glutamate 92 (proton acceptor) is an active-site residue. Residues 98–330 (FHYGLSVCVT…TELGINCGVR (233 aa)) enclose the Radical SAM core domain. Cysteines 105 and 341 form a disulfide. Residues cysteine 112, cysteine 116, and cysteine 119 each coordinate [4Fe-4S] cluster. S-adenosyl-L-methionine is bound by residues 164 to 165 (GE), serine 196, 219 to 221 (SLH), and asparagine 297. Cysteine 341 (S-methylcysteine intermediate) is an active-site residue.

This sequence belongs to the radical SAM superfamily. RlmN family. It depends on [4Fe-4S] cluster as a cofactor.

Its subcellular location is the cytoplasm. The catalysed reaction is adenosine(2503) in 23S rRNA + 2 reduced [2Fe-2S]-[ferredoxin] + 2 S-adenosyl-L-methionine = 2-methyladenosine(2503) in 23S rRNA + 5'-deoxyadenosine + L-methionine + 2 oxidized [2Fe-2S]-[ferredoxin] + S-adenosyl-L-homocysteine. It catalyses the reaction adenosine(37) in tRNA + 2 reduced [2Fe-2S]-[ferredoxin] + 2 S-adenosyl-L-methionine = 2-methyladenosine(37) in tRNA + 5'-deoxyadenosine + L-methionine + 2 oxidized [2Fe-2S]-[ferredoxin] + S-adenosyl-L-homocysteine. Specifically methylates position 2 of adenine 2503 in 23S rRNA and position 2 of adenine 37 in tRNAs. This Oceanobacillus iheyensis (strain DSM 14371 / CIP 107618 / JCM 11309 / KCTC 3954 / HTE831) protein is Probable dual-specificity RNA methyltransferase RlmN.